Reading from the N-terminus, the 453-residue chain is Autophagy-related protein 21 (453 aa).

Residues 4-137 (LRFNQDASCC…NDQIFIYDIS (134 aa)) form a WD 1 repeat. Residues 177–207 (GNELDRIRSKSNNNNDQTNSDNGRSRTYSIN) are disordered. The segment covering 187–198 (SNNNNDQTNSDN) has biased composition (low complexity). WD repeat units follow at residues 252 to 347 (NLKP…RTDD) and 419 to 453 (FDNK…SHFI). The L/FRRG motif motif lies at 310–314 (FRRGS).

Belongs to the WD repeat PROPPIN family.

It is found in the cytoplasm. Its subcellular location is the membrane. The protein localises to the vacuole membrane. Functionally, required for cytoplasm to vacuole transport (Cvt) vesicles formation and mitophagy. Involved in binding of phosphatidylethanolamine to ATG8 and in recruitment of ATG8 and ATG5 to the pre-autophagosomal structure. Protects ATG8 from ARG4-mediated cleavage. The sequence is that of Autophagy-related protein 21 (ATG21) from Candida glabrata (strain ATCC 2001 / BCRC 20586 / JCM 3761 / NBRC 0622 / NRRL Y-65 / CBS 138) (Yeast).